Reading from the N-terminus, the 207-residue chain is ATP synthase subunit b 2 (207 aa).

Residues 53–72 (TYASQLLWLVITFSVFYLLM) traverse the membrane as a helical segment.

This sequence belongs to the ATPase B chain family. In terms of assembly, F-type ATPases have 2 components, F(1) - the catalytic core - and F(0) - the membrane proton channel. F(1) has five subunits: alpha(3), beta(3), gamma(1), delta(1), epsilon(1). F(0) has three main subunits: a(1), b(2) and c(10-14). The alpha and beta chains form an alternating ring which encloses part of the gamma chain. F(1) is attached to F(0) by a central stalk formed by the gamma and epsilon chains, while a peripheral stalk is formed by the delta and b chains.

It localises to the cell inner membrane. Functionally, f(1)F(0) ATP synthase produces ATP from ADP in the presence of a proton or sodium gradient. F-type ATPases consist of two structural domains, F(1) containing the extramembraneous catalytic core and F(0) containing the membrane proton channel, linked together by a central stalk and a peripheral stalk. During catalysis, ATP synthesis in the catalytic domain of F(1) is coupled via a rotary mechanism of the central stalk subunits to proton translocation. Component of the F(0) channel, it forms part of the peripheral stalk, linking F(1) to F(0). The b'-subunit is a diverged and duplicated form of b found in plants and photosynthetic bacteria. The chain is ATP synthase subunit b 2 (atpF2) from Rhizobium leguminosarum bv. trifolii (strain WSM2304).